The following is a 152-amino-acid chain: Lipoprotein signal peptidase (152 aa).

The next 2 membrane-spanning stretches (helical) occupy residues 55–75 (NGRWFFVAVAALAVAGILYYL) and 87–107 (VALGLVMGGAVGNMIDRIATG). Residues D111 and D129 contribute to the active site. Residues 125 to 145 (FNVADICVTVGVGLLFLHLVL) form a helical membrane-spanning segment.

This sequence belongs to the peptidase A8 family.

It localises to the cell membrane. The catalysed reaction is Release of signal peptides from bacterial membrane prolipoproteins. Hydrolyzes -Xaa-Yaa-Zaa-|-(S,diacylglyceryl)Cys-, in which Xaa is hydrophobic (preferably Leu), and Yaa (Ala or Ser) and Zaa (Gly or Ala) have small, neutral side chains.. Its pathway is protein modification; lipoprotein biosynthesis (signal peptide cleavage). Functionally, this protein specifically catalyzes the removal of signal peptides from prolipoproteins. The polypeptide is Lipoprotein signal peptidase (Symbiobacterium thermophilum (strain DSM 24528 / JCM 14929 / IAM 14863 / T)).